Consider the following 217-residue polypeptide: ATP-dependent Clp protease proteolytic subunit (217 aa).

Serine 121 functions as the Nucleophile in the catalytic mechanism. The active site involves histidine 146.

This sequence belongs to the peptidase S14 family. As to quaternary structure, fourteen ClpP subunits assemble into 2 heptameric rings which stack back to back to give a disk-like structure with a central cavity, resembling the structure of eukaryotic proteasomes.

The protein resides in the cytoplasm. It catalyses the reaction Hydrolysis of proteins to small peptides in the presence of ATP and magnesium. alpha-casein is the usual test substrate. In the absence of ATP, only oligopeptides shorter than five residues are hydrolyzed (such as succinyl-Leu-Tyr-|-NHMec, and Leu-Tyr-Leu-|-Tyr-Trp, in which cleavage of the -Tyr-|-Leu- and -Tyr-|-Trp bonds also occurs).. Its function is as follows. Cleaves peptides in various proteins in a process that requires ATP hydrolysis. Has a chymotrypsin-like activity. Plays a major role in the degradation of misfolded proteins. This chain is ATP-dependent Clp protease proteolytic subunit, found in Burkholderia cenocepacia (strain HI2424).